The chain runs to 127 residues: Fluoride-specific ion channel FluC (127 aa).

Transmembrane regions (helical) follow at residues 1 to 21 (MMSYLIVFFGAGIGGMARHMV), 32 to 52 (EFPFGTLFINMLGSFLIGAVV), 71 to 91 (TGILGGFTTFSAFSLETVLLY), and 96 to 116 (VFLAASYAVASVTLSVGALLL). 2 residues coordinate Na(+): Gly-75 and Thr-78.

The protein belongs to the fluoride channel Fluc/FEX (TC 1.A.43) family.

It is found in the cell inner membrane. It catalyses the reaction fluoride(in) = fluoride(out). Its activity is regulated as follows. Na(+) is not transported, but it plays an essential structural role and its presence is essential for fluoride channel function. Fluoride-specific ion channel. Important for reducing fluoride concentration in the cell, thus reducing its toxicity. In Granulibacter bethesdensis (strain ATCC BAA-1260 / CGDNIH1), this protein is Fluoride-specific ion channel FluC.